The chain runs to 157 residues: Snaclec 3 (157 aa).

Positions 1–23 (MGRLIFLSFGWLVVFLSLSGTGA) are cleaved as a signal peptide. 3 cysteine pairs are disulfide-bonded: Cys-27–Cys-38, Cys-55–Cys-153, and Cys-128–Cys-145. Residues 34 to 154 (YGQHCYRAFS…CAGHYPFICK (121 aa)) enclose the C-type lectin domain.

This sequence belongs to the snaclec family. As to quaternary structure, heterodimer; disulfide-linked. As to expression, expressed by the venom gland.

The protein localises to the secreted. Interferes with one step of hemostasis (modulation of platelet aggregation, or coagulation cascade, for example). This Bitis gabonica (Gaboon adder) protein is Snaclec 3.